A 398-amino-acid polypeptide reads, in one-letter code: uncharacterized protein (398 aa).

Positions 1–21 (MRKVGITLSVVALVIMGFVAG) are cleaved as a signal peptide. Position 22 is an N-acetylcysteine (C22). Residue C22 is the site of S-archaeol cysteine attachment.

This sequence belongs to the BMP lipoprotein family.

It localises to the cell membrane. This is an uncharacterized protein from Pyrococcus furiosus (strain ATCC 43587 / DSM 3638 / JCM 8422 / Vc1).